The sequence spans 101 residues: Small ribosomal subunit protein uS14 (101 aa).

It belongs to the universal ribosomal protein uS14 family. Part of the 30S ribosomal subunit. Contacts proteins S3 and S10.

Its function is as follows. Binds 16S rRNA, required for the assembly of 30S particles and may also be responsible for determining the conformation of the 16S rRNA at the A site. The polypeptide is Small ribosomal subunit protein uS14 (Pseudomonas syringae pv. syringae (strain B728a)).